The chain runs to 196 residues: Protein LSM12 homolog A (196 aa).

Residues 3–73 (APGPGEYFSV…VSEVDIINDR (71 aa)) enclose the Sm domain. Residues 81-175 (ASLNISKLAN…IVEKHFRDVE (95 aa)) enclose the AD domain. Residues 174-196 (VESQKTMQRSQAQQTQKDSSLSS) are disordered. Positions 177-196 (QKTMQRSQAQQTQKDSSLSS) are enriched in polar residues.

This sequence belongs to the LSM12 family.

In Danio rerio (Zebrafish), this protein is Protein LSM12 homolog A (lsm12a).